Consider the following 669-residue polypeptide: Dymeclin (669 aa).

A lipid anchor (N-myristoyl glycine) is attached at G2.

It belongs to the dymeclin family. Interacts with GOLM1 and PPIB. Myristoylated in vitro; myristoylation is not essential for protein targeting to Golgi compartment.

The protein resides in the cytoplasm. It localises to the golgi apparatus. The protein localises to the membrane. In terms of biological role, necessary for correct organization of Golgi apparatus. Involved in bone development. This chain is Dymeclin (Dym), found in Mus musculus (Mouse).